A 147-amino-acid chain; its full sequence is RxLR effector protein Avr3a (147 aa).

An N-terminal signal peptide occupies residues 1 to 21; sequence MRLAIMLSATAVAINFATSSA. The RxLR-dEER signature appears at 44-59; it reads RLLRKNEENEETSEER. Position 48 is an N6-acetyllysine (Lys-48). Residues 77–147 are effector domain; sequence ALTERADAKK…YMMHLGLTGY (71 aa).

Belongs to the RxLR effector family. As to quaternary structure, forms homodimers via the RxLR-dEER motif. Interacts with host E3 ligase CMPG1. Interacts with host DRP2. Proteolytically cleaved. The cleavage site directly after the RxLR sequence and the high conservation among other effector proteins suggest that the RxLR motif might play a crucial role in the intracellular processing before secretion. Post-translationally, glycosylated. In terms of processing, N-acetylated at Lys-48 after cleavage.

Its subcellular location is the secreted. The protein resides in the host cytoplasm. In terms of biological role, multifunctional effector that can suppress host BAK1/SERK3-mediated immunity through at least two different pathways. Manipulates plant immunity by targeting and stabilizing host E3 ligase CMPG1. Preventing the normal 26S proteasome-dependent degradation of potato CMPG1, and thus potentially of its protein substrates in the host cell, further abolishes host cell death during the biotrophic phase of infection. Also associates with and affects the function of the dynamin-related protein 2 (DRP2), a plant GTPase involved in immune receptor-mediated endocytosis. The Avr3a(EM) form evades recognition by R3a, thus does not trigger R3a-mediated hypersensitivity and does not suppress INF1-induced cell death. The chain is RxLR effector protein Avr3a from Phytophthora infestans (Potato late blight agent).